The primary structure comprises 673 residues: Acetoacetyl-CoA synthetase (673 aa).

The protein belongs to the ATP-dependent AMP-binding enzyme family.

The protein localises to the cytoplasm. It is found in the cytosol. It carries out the reaction acetoacetate + ATP + CoA = acetoacetyl-CoA + AMP + diphosphate. Its function is as follows. Converts acetoacetate to acetoacetyl-CoA in the cytosol. Ketone body-utilizing enzyme, responsible for the synthesis of cholesterol and fatty acids. The protein is Acetoacetyl-CoA synthetase (aacs) of Danio rerio (Zebrafish).